The primary structure comprises 150 residues: Small ribosomal subunit protein uS11y (150 aa).

Residues 129–150 (EDVTPVPTDSTRRKGGRRGRRL) form a disordered region. The segment covering 141–150 (RKGGRRGRRL) has biased composition (basic residues).

The protein belongs to the universal ribosomal protein uS11 family.

The chain is Small ribosomal subunit protein uS11y from Zea mays (Maize).